We begin with the raw amino-acid sequence, 1141 residues long: DNA-directed RNA polymerase subunit beta (1141 aa).

The protein belongs to the RNA polymerase beta chain family. The RNAP catalytic core consists of 2 alpha, 1 beta, 1 beta' and 1 omega subunit. When a sigma factor is associated with the core the holoenzyme is formed, which can initiate transcription.

The enzyme catalyses RNA(n) + a ribonucleoside 5'-triphosphate = RNA(n+1) + diphosphate. Functionally, DNA-dependent RNA polymerase catalyzes the transcription of DNA into RNA using the four ribonucleoside triphosphates as substrates. This chain is DNA-directed RNA polymerase subunit beta, found in Parafrankia sp. (strain EAN1pec).